A 552-amino-acid polypeptide reads, in one-letter code: Hyaluronan synthase 2 (552 aa).

The Cytoplasmic segment spans residues 1–11; that stretch reads MHCERFLCILR. A helical transmembrane segment spans residues 12–32; the sequence is IIGTTLFGVSLLLGITAAYIV. At 33 to 45 the chain is on the extracellular side; that stretch reads GYQFIQTDNYYFS. Residues 46 to 66 form a helical membrane-spanning segment; that stretch reads FGLYGAFLASHLIIQSLFAFL. Residues 67–374 are Cytoplasmic-facing; that stretch reads EHRKMKKSLE…NAMWFHKHHL (308 aa). The residue at position 110 (threonine 110) is a Phosphothreonine. Residue lysine 190 forms a Glycyl lysine isopeptide (Lys-Gly) (interchain with G-Cter in ubiquitin) linkage. O-linked (GlcNAc) serine glycosylation is present at serine 221. Phosphothreonine is present on threonine 328. The helical transmembrane segment at 375–395 threads the bilayer; sequence WMTYEAVITGFFPFFLIATVI. Topologically, residues 396-402 are extracellular; the sequence is QLFYRGK. The helical transmembrane segment at 403–423 threads the bilayer; the sequence is IWNILLFLLTVQLVGLIKSSF. Topologically, residues 424–429 are cytoplasmic; sequence ASCLRG. A helical transmembrane segment spans residues 430–450; the sequence is NIVMVFMSLYSVLYMSSLLPA. Residues 451 to 475 are Extracellular-facing; the sequence is KMFAIATINKAGWGTSGRKTIVVNF. The chain crosses the membrane as a helical span at residues 476 to 496; the sequence is IGLIPVSVWFTILLGGVIFTI. Topologically, residues 497 to 510 are cytoplasmic; that stretch reads YKESKKPFSESKQT. Residues 511-531 form a helical membrane-spanning segment; sequence VLIVGTLLYACYWVMLLTLYV. Residues 532 to 552 are Extracellular-facing; the sequence is VLINKCGRRKKGQQYDMVLDV.

This sequence belongs to the NodC/HAS family. In terms of assembly, homodimer; dimerization promotes enzymatic activity. Forms heterodimer with HAS3. Forms heterodimer with HAS1. Requires Mg(2+) as cofactor. In terms of processing, phosphorylation at Thr-328 is essential for hyaluronan synthase activity. Post-translationally, O-GlcNAcylation at Ser-221 increases the stability of HAS2 and plasma membrane localization. Ubiquitination at Lys-190; this ubiquitination is essential for hyaluronan synthase activity and homo- or hetero-oligomerization. Can also be poly-ubiquitinated. Deubiquitinated by USP17L22/USP17 and USP4. USP17L22/USP17 efficiently removes 'Lys-63'- and 'Lys-48'-linked polyubiquitin chains, whereas USP4 preferentially removes monoubiquitination and, partially, both 'Lys-63'- and 'Lys-48'-linked polyubiquitin chain. In terms of tissue distribution, overexpressed in skin fibroblasts.

Its subcellular location is the cell membrane. It is found in the endoplasmic reticulum membrane. The protein localises to the vesicle. The protein resides in the golgi apparatus membrane. It localises to the lysosome. The catalysed reaction is [hyaluronan](n) + UDP-N-acetyl-alpha-D-glucosamine = N-acetyl-beta-D-glucosaminyl-(1-&gt;4)-[hyaluronan](n) + UDP + H(+). It catalyses the reaction N-acetyl-beta-D-glucosaminyl-(1-&gt;4)-[hyaluronan](n) + UDP-alpha-D-glucuronate = [hyaluronan](n+1) + UDP + H(+). Its pathway is glycan biosynthesis; hyaluronan biosynthesis. Functionally, catalyzes the addition of GlcNAc or GlcUA monosaccharides to the nascent hyaluronan polymer. Therefore, it is essential to hyaluronan synthesis a major component of most extracellular matrices that has a structural role in tissues architectures and regulates cell adhesion, migration and differentiation. This is one of three isoenzymes responsible for cellular hyaluronan synthesis and it is particularly responsible for the synthesis of high molecular mass hyaluronan. The protein is Hyaluronan synthase 2 (Has2) of Heterocephalus glaber (Naked mole rat).